Consider the following 70-residue polypeptide: Translational regulator CsrA (70 aa).

It belongs to the CsrA/RsmA family. In terms of assembly, homodimer; the beta-strands of each monomer intercalate to form a hydrophobic core, while the alpha-helices form wings that extend away from the core.

It is found in the cytoplasm. In terms of biological role, a translational regulator that binds mRNA to regulate translation initiation and/or mRNA stability. Usually binds in the 5'-UTR at or near the Shine-Dalgarno sequence preventing ribosome-binding, thus repressing translation. Its main target seems to be the major flagellin gene, while its function is anatagonized by FliW. The protein is Translational regulator CsrA of Rhodopirellula baltica (strain DSM 10527 / NCIMB 13988 / SH1).